The chain runs to 747 residues: DNA topoisomerase 4 subunit A (747 aa).

The region spanning 35-498 (LPFIGDGLKP…EAKMISESDM (464 aa)) is the Topo IIA-type catalytic domain. The active-site O-(5'-phospho-DNA)-tyrosine intermediate is Tyr-124.

It belongs to the type II topoisomerase GyrA/ParC subunit family. ParC type 1 subfamily. In terms of assembly, heterotetramer composed of ParC and ParE.

It localises to the cell membrane. It catalyses the reaction ATP-dependent breakage, passage and rejoining of double-stranded DNA.. Topoisomerase IV is essential for chromosome segregation. It relaxes supercoiled DNA. Performs the decatenation events required during the replication of a circular DNA molecule. This is DNA topoisomerase 4 subunit A from Haemophilus influenzae (strain ATCC 51907 / DSM 11121 / KW20 / Rd).